The primary structure comprises 327 residues: Serine/threonine-protein phosphatase PP2A catalytic subunit (327 aa).

Mn(2+)-binding residues include aspartate 75, histidine 77, aspartate 103, and asparagine 135. Histidine 136 functions as the Proton donor in the catalytic mechanism. 2 residues coordinate Mn(2+): histidine 185 and histidine 259. At leucine 327 the chain carries Leucine methyl ester.

This sequence belongs to the PPP phosphatase family. PP-2A subfamily. Requires Mn(2+) as cofactor.

It carries out the reaction O-phospho-L-seryl-[protein] + H2O = L-seryl-[protein] + phosphate. It catalyses the reaction O-phospho-L-threonyl-[protein] + H2O = L-threonyl-[protein] + phosphate. This chain is Serine/threonine-protein phosphatase PP2A catalytic subunit (pph-1), found in Neurospora crassa (strain ATCC 24698 / 74-OR23-1A / CBS 708.71 / DSM 1257 / FGSC 987).